The sequence spans 113 residues: P antigen family member 3 (113 aa).

A compositionally biased stretch (basic residues) spans 1-12 (MSGHQRTRSRSR). 2 disordered regions span residues 1 to 61 (MSGH…EGAL) and 78 to 113 (SKTGGERGDGPNVKGEFLPNLEPVKIPEAGEGQPSV).

The protein belongs to the GAGE family.

The protein is P antigen family member 3 (PAGE3) of Homo sapiens (Human).